A 120-amino-acid polypeptide reads, in one-letter code: MAFTKSKQPRKQRKALFNAPLHLRRKVMSAMLSKELKEKLGKNAIPVRKGDVVRIMRGDFKGLEGEVIKVDLKRYRIYVEGANNKRQDGREVPYPIHPSNVMIIKLYDKDEKRFKHIKNE.

Belongs to the universal ribosomal protein uL24 family. In terms of assembly, part of the 50S ribosomal subunit.

In terms of biological role, one of two assembly initiator proteins, it binds directly to the 5'-end of the 23S rRNA, where it nucleates assembly of the 50S subunit. Its function is as follows. Located at the polypeptide exit tunnel on the outside of the subunit. This is Large ribosomal subunit protein uL24 from Methanocaldococcus jannaschii (strain ATCC 43067 / DSM 2661 / JAL-1 / JCM 10045 / NBRC 100440) (Methanococcus jannaschii).